A 303-amino-acid chain; its full sequence is Nucleotide-binding protein SAB0719 (303 aa).

Residue 18–25 (GLSGAGKS) coordinates ATP. 69–72 (DLRG) is a GTP binding site.

Belongs to the RapZ-like family.

Its function is as follows. Displays ATPase and GTPase activities. In Staphylococcus aureus (strain bovine RF122 / ET3-1), this protein is Nucleotide-binding protein SAB0719.